We begin with the raw amino-acid sequence, 341 residues long: L-threonine 3-dehydrogenase (341 aa).

Position 38 (cysteine 38) interacts with Zn(2+). Residues threonine 40 and histidine 43 each act as charge relay system in the active site. Zn(2+) contacts are provided by histidine 63, glutamate 64, cysteine 93, cysteine 96, cysteine 99, and cysteine 107. Residues isoleucine 175, aspartate 195, arginine 200, 262-264, and 286-287 each bind NAD(+); these read LGI and IY.

It belongs to the zinc-containing alcohol dehydrogenase family. As to quaternary structure, homotetramer. It depends on Zn(2+) as a cofactor.

It is found in the cytoplasm. The enzyme catalyses L-threonine + NAD(+) = (2S)-2-amino-3-oxobutanoate + NADH + H(+). It participates in amino-acid degradation; L-threonine degradation via oxydo-reductase pathway; glycine from L-threonine: step 1/2. Functionally, catalyzes the NAD(+)-dependent oxidation of L-threonine to 2-amino-3-ketobutyrate. This Escherichia coli O139:H28 (strain E24377A / ETEC) protein is L-threonine 3-dehydrogenase.